A 1024-amino-acid chain; its full sequence is Beta-galactosidase 2 (1024 aa).

Positions 103 and 202 each coordinate substrate. Residue D202 coordinates Na(+). Residues E417, H419, and E462 each coordinate Mg(2+). Substrate is bound by residues E462 and 538 to 541; that span reads EYAH. The Proton donor role is filled by E462. Residue E538 is the Nucleophile of the active site. N598 is a binding site for Mg(2+). F602 and N605 together coordinate Na(+). 2 residues coordinate substrate: N605 and W1000.

This sequence belongs to the glycosyl hydrolase 2 family. As to quaternary structure, homotetramer. Mg(2+) serves as cofactor. It depends on Na(+) as a cofactor.

It catalyses the reaction Hydrolysis of terminal non-reducing beta-D-galactose residues in beta-D-galactosides.. The polypeptide is Beta-galactosidase 2 (Klebsiella pneumoniae subsp. pneumoniae (strain ATCC 700721 / MGH 78578)).